A 335-amino-acid polypeptide reads, in one-letter code: Nicotinate-nucleotide--dimethylbenzimidazole phosphoribosyltransferase (335 aa).

Glu304 acts as the Proton acceptor in catalysis.

This sequence belongs to the CobT family.

It carries out the reaction 5,6-dimethylbenzimidazole + nicotinate beta-D-ribonucleotide = alpha-ribazole 5'-phosphate + nicotinate + H(+). It functions in the pathway nucleoside biosynthesis; alpha-ribazole biosynthesis; alpha-ribazole from 5,6-dimethylbenzimidazole: step 1/2. In terms of biological role, catalyzes the synthesis of alpha-ribazole-5'-phosphate from nicotinate mononucleotide (NAMN) and 5,6-dimethylbenzimidazole (DMB). The protein is Nicotinate-nucleotide--dimethylbenzimidazole phosphoribosyltransferase of Thermus thermophilus (strain ATCC 27634 / DSM 579 / HB8).